The following is a 118-amino-acid chain: Transcriptional regulator WhiB4 (118 aa).

A 4Fe-4S Wbl-type domain is found at 36 to 92 (LCRTTDPDELFVRGAAQRKAAVICRHCPVMQECAADALDNKVEFGVWGGMTERQRRA). Residues cysteine 37, cysteine 59, cysteine 62, and cysteine 68 each contribute to the [4Fe-4S] cluster site. 2 cysteine pairs are disulfide-bonded: cysteine 37–cysteine 68 and cysteine 59–cysteine 62.

It belongs to the WhiB family. Requires [4Fe-4S] cluster as cofactor. Post-translationally, the Fe-S cluster can be nitrosylated by nitric oxide (NO). Upon Fe-S cluster removal intramolecular disulfide bonds are formed.

Its subcellular location is the cytoplasm. Functionally, acts as a transcriptional regulator. Probably redox-responsive. The apo- but not holo-form probably binds DNA. This Mycobacterium tuberculosis (strain CDC 1551 / Oshkosh) protein is Transcriptional regulator WhiB4 (whiB4).